The sequence spans 1895 residues: 1,3-beta-glucan synthase component GSC2 (1895 aa).

Composition is skewed to polar residues over residues 1-16 and 25-34; these read MSYN…YSNG and PTYQVTQDQS. Disordered regions lie at residues 1 to 143 and 269 to 292; these read MSYN…PYGN and ARKA…EETL. Residues 1-473 lie on the Extracellular side of the membrane; sequence MSYNDPNLNG…WLHLVTNFNR (473 aa). The span at 65-78 shows a compositional bias: low complexity; the sequence is QFPQGQDPSQDQGP. Polar residues-rich tracts occupy residues 79–107 and 115–141; these read YNND…SDFS and TYPN…STPY. The span at 269–278 shows a compositional bias: basic residues; that stretch reads ARKAKKKNKK. A Glycyl lysine isopeptide (Lys-Gly) (interchain with G-Cter in ubiquitin) cross-link involves residue Lys278. 2 positions are modified to phosphothreonine: Thr288 and Thr291. Residue Lys405 forms a Glycyl lysine isopeptide (Lys-Gly) (interchain with G-Cter in ubiquitin) linkage. The helical transmembrane segment at 474–494 threads the bilayer; it reads IWIMHISVYWMYCAYNAPTFY. Residues 495–511 are Cytoplasmic-facing; that stretch reads THNYQQLVDNQPLAAYK. Residues 512–532 traverse the membrane as a helical segment; that stretch reads WATAALGGTVASLIQVAATLC. Residues 533 to 550 are Extracellular-facing; the sequence is EWSFVPRKWAGAQHLSRR. A helical membrane pass occupies residues 551-571; the sequence is FWFLCVIMGINLGPVIFVFAY. The Cytoplasmic segment spans residues 572–582; it reads DKDTVYSTAAH. A helical membrane pass occupies residues 583–603; sequence VVGAVMFFVAVATLVFFSVMP. At 604 to 1579 the chain is on the extracellular side; that stretch reads LGGLFTSYMK…DASRAHRTNL (976 aa). Residues Lys929, Lys934, Lys1558, and Lys1566 each participate in a glycyl lysine isopeptide (Lys-Gly) (interchain with G-Cter in ubiquitin) cross-link. Residues 1580–1600 form a helical membrane-spanning segment; that stretch reads IMAEIIPCAIYAAGCFIAFTF. The Cytoplasmic segment spans residues 1601 to 1620; the sequence is INAQTGVKTTDEDRVNSTLR. A helical membrane pass occupies residues 1621 to 1641; the sequence is IIICTLAPIVIDIGVLFFCMG. Residues 1642–1758 lie on the Extracellular side of the membrane; sequence LSCCSGPLLG…LTAKVIELSE (117 aa). The chain crosses the membrane as a helical span at residues 1759-1779; that stretch reads FAADFVLGHVILIFQLPVICI. At 1780–1821 the chain is on the cytoplasmic side; sequence PKIDKFHSIMLFWLKPSRQIRPPIYSLKQARLRKRMVRRYCS. The chain crosses the membrane as a helical span at residues 1822 to 1842; the sequence is LYFLVLIIFAGCIVGPAVASA. At 1843–1895 the chain is on the extracellular side; it reads HVPKDLGSGLTGTFHNLVQPRNVSNNDTGSQMSTYKSHYYTHTPSLKTWSTIK.

The protein belongs to the glycosyltransferase 48 family. Component of the 1,3-beta-glucan synthase (GS) complex, composed of two alternate catalytic subunits FKS1 or GSC2, and a regulatory subunit RHO1. Interacts with SMK1.

It localises to the membrane. The catalysed reaction is [(1-&gt;3)-beta-D-glucosyl](n) + UDP-alpha-D-glucose = [(1-&gt;3)-beta-D-glucosyl](n+1) + UDP + H(+). In terms of biological role, alternate catalytic subunit of the 1,3-beta-glucan synthase (GS) complex. Synthesizes 1,3-beta-glucan, a major structural component of the yeast cell wall. Required for spore wall assembly. Negative regulation of activity by SMK1 is important for spore wall deposition. Activity is positively regulated by RHO1. The sequence is that of 1,3-beta-glucan synthase component GSC2 from Saccharomyces cerevisiae (strain ATCC 204508 / S288c) (Baker's yeast).